Reading from the N-terminus, the 590-residue chain is Threonine dehydratase biosynthetic, chloroplastic (590 aa).

The transit peptide at 1 to 44 (MLSTSTTNSSILPFRSRASSSTFIARPPANFNSIFTTSVRVFPI) directs the protein to the chloroplast. N6-(pyridoxal phosphate)lysine is present on Lys-139. 2 consecutive ACT-like domains span residues 416-488 (ALLG…NISH) and 509-580 (EVFV…IDQY).

This sequence belongs to the serine/threonine dehydratase family. Pyridoxal 5'-phosphate is required as a cofactor. Found at higher levels in flowers than in other organs.

It localises to the plastid. It is found in the chloroplast. The enzyme catalyses L-threonine = 2-oxobutanoate + NH4(+). It participates in amino-acid biosynthesis; L-isoleucine biosynthesis; 2-oxobutanoate from L-threonine: step 1/1. Its activity is regulated as follows. Allosterically inhibited by isoleucine. This is Threonine dehydratase biosynthetic, chloroplastic from Cicer arietinum (Chickpea).